Reading from the N-terminus, the 369-residue chain is H-2 class I histocompatibility antigen, K-K alpha chain (369 aa).

The N-terminal stretch at 1-21 is a signal peptide; sequence MAPCMLLLLLAAALAPTQTRA. Positions 22–111 are alpha-1; sequence GPHSLRYFHT…ALRYYNQSAG (90 aa). At 22–305 the chain is on the extracellular side; that stretch reads GPHSLRYFHT…EPPPSTVSNT (284 aa). N-linked (GlcNAc...) asparagine glycosylation is present at Asn-107. The interval 112–203 is alpha-2; it reads GSHTFQRMYG…QLGNATLPRT (92 aa). Cysteines 122 and 185 form a disulfide. Asn-197 is a glycosylation site (N-linked (GlcNAc...) asparagine). The interval 204 to 295 is alpha-3; that stretch reads DSPKAHVTRH…GLPEPLTLRW (92 aa). One can recognise an Ig-like C1-type domain in the interval 206-294; that stretch reads PKAHVTRHSR…QGLPEPLTLR (89 aa). Residues Cys-224 and Cys-280 are joined by a disulfide bond. The segment at 296 to 305 is connecting peptide; that stretch reads EPPPSTVSNT. Residues 306-328 form a helical membrane-spanning segment; that stretch reads VIIAVLVVLGAAIVTGAVVAFVM. The Cytoplasmic portion of the chain corresponds to 329-369; it reads KMRRRNTGGKGGDYALAPGSQTSDLSLPDCKVMVHDPHSLA. Phosphoserine is present on residues Ser-351 and Ser-354.

The protein belongs to the MHC class I family. As to quaternary structure, heterodimer of an alpha chain and a beta chain (beta-2-microglobulin).

It localises to the membrane. Functionally, involved in the presentation of foreign antigens to the immune system. The sequence is that of H-2 class I histocompatibility antigen, K-K alpha chain (H2-K1) from Mus musculus (Mouse).